The following is a 322-amino-acid chain: 4-hydroxythreonine-4-phosphate dehydrogenase (322 aa).

T132 is a substrate binding site. Residues H160, H205, and H260 each contribute to the a divalent metal cation site. Residues K268, N277, and R286 each contribute to the substrate site.

It belongs to the PdxA family. Homodimer. The cofactor is Zn(2+). It depends on Mg(2+) as a cofactor. Co(2+) serves as cofactor.

Its subcellular location is the cytoplasm. The catalysed reaction is 4-(phosphooxy)-L-threonine + NAD(+) = 3-amino-2-oxopropyl phosphate + CO2 + NADH. The protein operates within cofactor biosynthesis; pyridoxine 5'-phosphate biosynthesis; pyridoxine 5'-phosphate from D-erythrose 4-phosphate: step 4/5. Catalyzes the NAD(P)-dependent oxidation of 4-(phosphooxy)-L-threonine (HTP) into 2-amino-3-oxo-4-(phosphooxy)butyric acid which spontaneously decarboxylates to form 3-amino-2-oxopropyl phosphate (AHAP). This chain is 4-hydroxythreonine-4-phosphate dehydrogenase, found in Xanthomonas oryzae pv. oryzae (strain PXO99A).